The primary structure comprises 385 residues: Interleukin-13 receptor subunit alpha-2 (385 aa).

The first 23 residues, 1–23 (MALMAVNTRCLCLFLLCTITGHS), serve as a signal peptide directing secretion. The Extracellular portion of the chain corresponds to 24 to 336 (LEIKVNPPQD…WEGYTGPDSK (313 aa)). 3 Fibronectin type-III domains span residues 30–130 (PPQD…ADEG), 133–221 (GTKI…PIRS), and 236–334 (PPEF…TGPD). Cysteine 61 and cysteine 109 form a disulfide bridge. A glycan (N-linked (GlcNAc...) asparagine) is linked at asparagine 111. Residues cysteine 141 and cysteine 151 are joined by a disulfide bond. An N-linked (GlcNAc...) asparagine glycan is attached at asparagine 164. The cysteines at positions 180 and 193 are disulfide-linked. 2 N-linked (GlcNAc...) asparagine glycosylation sites follow: asparagine 211 and asparagine 295. A disulfide bridge connects residues cysteine 265 and cysteine 312. The WSXWS motif signature appears at 318–322 (WSEWS). Residues 337–357 (IVFIVPVCLFFIFLLLLLCLI) traverse the membrane as a helical segment. Topologically, residues 358–385 (VEKEDPEPTLSLHVDLNKEMYAYEETLC) are cytoplasmic.

Belongs to the type I cytokine receptor family. Type 5 subfamily. As to quaternary structure, interacts with IL4RA. Interacts with high affinity to interleukin-13 (IL13), but not to interleukin-4 (IL4). In terms of processing, cleaved by MMP8 leading to a soluble form that is also able to interact with IL13.

It localises to the cell membrane. Its function is as follows. Cell surface receptor that plays a role in the regulation of IL-13-mediated responses. Functions as a decoy receptor that inhibits IL-13- and IL-4-mediated signal transduction via the JAK-STAT pathway and thereby modulates immune responses and inflammation. Serves as a functional signaling receptor for IL-13 in an alternative pathway involving AP-1 ultimately leading to the production of TGFB1. The sequence is that of Interleukin-13 receptor subunit alpha-2 (Il13ra2) from Rattus norvegicus (Rat).